A 985-amino-acid chain; its full sequence is Lateral signaling target protein 2 homolog (985 aa).

4 disordered regions span residues 310-453, 498-520, 533-640, and 747-892; these read PLGS…ETDE, EYGA…PSTS, LRLP…SSLS, and DNVF…TTTA. Composition is skewed to low complexity over residues 327–348, 384–393, and 401–422; these read HPTT…TNTH, SLSPNSTPTA, and PSHS…PADW. Over residues 423–453 the composition is skewed to acidic residues; the sequence is SDGDDEDEEDDDDDIEVEEEELDSTDDETDE. Ser-537 and Ser-538 each carry phosphoserine. Composition is skewed to basic residues over residues 563-589 and 596-607; these read VYRH…HHQH and HPHRTTRSGRKR. Low complexity-rich tracts occupy residues 629 to 640 and 761 to 770; these read ASGDTSAASSLS and NGNQANASAQ. The span at 776–785 shows a compositional bias: polar residues; it reads GSIQRNNTVD. Position 808 is a phosphoserine (Ser-808). Positions 812–866 are enriched in low complexity; that stretch reads QESASTSTSSSQLHQEQQQLQIQVQRQRNNSVGSNTPSSASSTSSSSEQNSPVSA. Residues 875–885 show a composition bias toward polar residues; it reads QSNNETQMPSS. The FYVE-type zinc finger occupies 904–964; sequence DGKAPRCMSC…VCRECYVREV (61 aa). Residues Cys-910, Cys-913, Cys-926, Cys-929, Cys-934, Cys-937, Cys-956, and Cys-959 each contribute to the Zn(2+) site.

The protein belongs to the lst-2 family.

Its function is as follows. Negative regulator of epidermal growth factor receptor (EGFR) signaling. This chain is Lateral signaling target protein 2 homolog, found in Drosophila ananassae (Fruit fly).